Consider the following 154-residue polypeptide: Nascent polypeptide-associated complex subunit beta (154 aa).

The region spanning 33-98 is the NAC-A/B domain; sequence EQDDTKLIEA…PQEKNVTQLI (66 aa). The disordered stretch occupies residues 125–154; the sequence is APTELNAGAPAGGDEGIPDLIDGEKFDEVE.

The protein belongs to the NAC-beta family. As to quaternary structure, part of the nascent polypeptide-associated complex (NAC), consisting of EGD2 and EGD1. NAC associates with ribosomes via EGD1.

The protein localises to the cytoplasm. The protein resides in the nucleus. Its function is as follows. Component of the nascent polypeptide-associated complex (NAC), a dynamic component of the ribosomal exit tunnel, protecting the emerging polypeptides from interaction with other cytoplasmic proteins to ensure appropriate nascent protein targeting. The NAC complex also promotes mitochondrial protein import by enhancing productive ribosome interactions with the outer mitochondrial membrane and blocks the inappropriate interaction of ribosomes translating non-secretory nascent polypeptides with translocation sites in the membrane of the endoplasmic reticulum. EGD1 may act as a transcription factor that exert a negative effect on the expression of several genes that are transcribed by RNA polymerase II. This chain is Nascent polypeptide-associated complex subunit beta (EGD1), found in Scheffersomyces stipitis (strain ATCC 58785 / CBS 6054 / NBRC 10063 / NRRL Y-11545) (Yeast).